Consider the following 378-residue polypeptide: Probable pectin lyase A (378 aa).

A signal peptide spans 1 to 18; sequence MKYQDLLAIAGCIANAGA. 2 disulfide bridges follow: Cys81–Cys100 and Cys90–Cys224. N-linked (GlcNAc...) asparagine glycosylation is present at Asn127. Arg254 is an active-site residue. A disulfide bond links Cys321 and Cys329.

Belongs to the polysaccharide lyase 1 family.

It is found in the secreted. It carries out the reaction Eliminative cleavage of (1-&gt;4)-alpha-D-galacturonan methyl ester to give oligosaccharides with 4-deoxy-6-O-methyl-alpha-D-galact-4-enuronosyl groups at their non-reducing ends.. Functionally, pectinolytic enzymes consist of four classes of enzymes: pectin lyase, polygalacturonase, pectin methylesterase and rhamnogalacturonase. Among pectinolytic enzymes, pectin lyase is the most important in depolymerization of pectin, since it cleaves internal glycosidic bonds of highly methylated pectins. The protein is Probable pectin lyase A (pelA) of Aspergillus fumigatus (strain CBS 144.89 / FGSC A1163 / CEA10) (Neosartorya fumigata).